The primary structure comprises 985 residues: UPF0182 protein Cgl0786/cg0896 (985 aa).

A run of 7 helical transmembrane segments spans residues 19–39 (VTWI…SVGF), 63–83 (IVLF…AGYF), 115–135 (VMVI…QRSW), 176–196 (SMML…MGGI), 215–235 (TQLA…YWLD), 262–282 (KIIL…AIFL), and 290–310 (LAVV…PLML). The disordered stretch occupies residues 904 to 944 (KEAQDIEEVDGTATTPSTDETDTDTDQPATETPTAPVSEAE). A compositionally biased stretch (low complexity) spans 929–939 (DQPATETPTAP).

This sequence belongs to the UPF0182 family.

The protein localises to the cell membrane. The protein is UPF0182 protein Cgl0786/cg0896 of Corynebacterium glutamicum (strain ATCC 13032 / DSM 20300 / JCM 1318 / BCRC 11384 / CCUG 27702 / LMG 3730 / NBRC 12168 / NCIMB 10025 / NRRL B-2784 / 534).